The following is a 472-amino-acid chain: Adenosylhomocysteinase (472 aa).

Substrate-binding residues include T64, D138, and E198. 199–201 (TTT) provides a ligand contact to NAD(+). Substrate contacts are provided by K228 and D232. NAD(+) contacts are provided by residues N233, 262 to 267 (GFGDVG), E285, N320, 341 to 343 (IGH), and N386.

Belongs to the adenosylhomocysteinase family. It depends on NAD(+) as a cofactor.

It is found in the cytoplasm. It catalyses the reaction S-adenosyl-L-homocysteine + H2O = L-homocysteine + adenosine. It participates in amino-acid biosynthesis; L-homocysteine biosynthesis; L-homocysteine from S-adenosyl-L-homocysteine: step 1/1. Functionally, may play a key role in the regulation of the intracellular concentration of adenosylhomocysteine. This is Adenosylhomocysteinase from Prochlorococcus marinus subsp. pastoris (strain CCMP1986 / NIES-2087 / MED4).